A 229-amino-acid chain; its full sequence is Orotate phosphoribosyltransferase (229 aa).

5-phospho-alpha-D-ribose 1-diphosphate-binding positions include Arg107, Lys108, Lys111, His113, and 133 to 141 (EDLTTAGGS). Thr137 contributes to the orotate binding site.

It belongs to the purine/pyrimidine phosphoribosyltransferase family. PyrE subfamily. Homodimer. Mg(2+) serves as cofactor.

The enzyme catalyses orotidine 5'-phosphate + diphosphate = orotate + 5-phospho-alpha-D-ribose 1-diphosphate. The protein operates within pyrimidine metabolism; UMP biosynthesis via de novo pathway; UMP from orotate: step 1/2. Functionally, catalyzes the transfer of a ribosyl phosphate group from 5-phosphoribose 1-diphosphate to orotate, leading to the formation of orotidine monophosphate (OMP). The sequence is that of Orotate phosphoribosyltransferase from Rhizobium johnstonii (strain DSM 114642 / LMG 32736 / 3841) (Rhizobium leguminosarum bv. viciae).